A 901-amino-acid chain; its full sequence is HTH-type transcriptional regulator MalT (901 aa).

An ATP-binding site is contributed by 39–46; that stretch reads SPAGYGKT. Positions 829-894 constitute an HTH luxR-type domain; the sequence is ELIRTSPLTQ…AAVQHAQKLL (66 aa). The segment at residues 853–872 is a DNA-binding region (H-T-H motif); the sequence is NEQIAGELEVAATTIKTHIR.

Belongs to the MalT family. In terms of assembly, monomer in solution. Oligomerizes to an active state in the presence of the positive effectors ATP and maltotriose.

With respect to regulation, activated by ATP and maltotriose, which are both required for DNA binding. Its function is as follows. Positively regulates the transcription of the maltose regulon whose gene products are responsible for uptake and catabolism of malto-oligosaccharides. Specifically binds to the promoter region of its target genes, recognizing a short DNA motif called the MalT box. The polypeptide is HTH-type transcriptional regulator MalT (Shigella boydii serotype 4 (strain Sb227)).